A 428-amino-acid chain; its full sequence is Enolase (428 aa).

Q163 provides a ligand contact to (2R)-2-phosphoglycerate. The Proton donor role is filled by E205. Residues D242, E285, and D312 each contribute to the Mg(2+) site. Residues K337, R366, S367, and K388 each contribute to the (2R)-2-phosphoglycerate site. The active-site Proton acceptor is the K337.

It belongs to the enolase family. Mg(2+) is required as a cofactor.

Its subcellular location is the cytoplasm. It is found in the secreted. It localises to the cell surface. The enzyme catalyses (2R)-2-phosphoglycerate = phosphoenolpyruvate + H2O. Its pathway is carbohydrate degradation; glycolysis; pyruvate from D-glyceraldehyde 3-phosphate: step 4/5. Functionally, catalyzes the reversible conversion of 2-phosphoglycerate (2-PG) into phosphoenolpyruvate (PEP). It is essential for the degradation of carbohydrates via glycolysis. In Neisseria meningitidis serogroup C / serotype 2a (strain ATCC 700532 / DSM 15464 / FAM18), this protein is Enolase.